Reading from the N-terminus, the 479-residue chain is Cardiolipin synthase A (479 aa).

Transmembrane regions (helical) follow at residues 8-28 and 38-58; these read LLAY…IHAV and IAWA…YLIF. PLD phosphodiesterase domains lie at 218–245 and 392–419; these read VNFR…GDEY and TPGF…DNRS. Catalysis depends on residues His-223, Lys-225, Asp-230, His-397, Lys-399, and Asp-404.

It belongs to the phospholipase D family. Cardiolipin synthase subfamily. ClsA sub-subfamily.

It is found in the cell inner membrane. It carries out the reaction 2 a 1,2-diacyl-sn-glycero-3-phospho-(1'-sn-glycerol) = a cardiolipin + glycerol. Functionally, catalyzes the reversible phosphatidyl group transfer from one phosphatidylglycerol molecule to another to form cardiolipin (CL) (diphosphatidylglycerol) and glycerol. The chain is Cardiolipin synthase A from Pseudomonas fluorescens (strain SBW25).